The chain runs to 155 residues: Endoribonuclease YbeY (155 aa).

His-114, His-118, and His-124 together coordinate Zn(2+).

The protein belongs to the endoribonuclease YbeY family. The cofactor is Zn(2+).

The protein localises to the cytoplasm. Single strand-specific metallo-endoribonuclease involved in late-stage 70S ribosome quality control and in maturation of the 3' terminus of the 16S rRNA. The polypeptide is Endoribonuclease YbeY (Buchnera aphidicola subsp. Acyrthosiphon pisum (strain APS) (Acyrthosiphon pisum symbiotic bacterium)).